A 369-amino-acid chain; its full sequence is Immunoglobulin superfamily member 5 (369 aa).

A signal peptide spans 1–24 (MEGSWRDVLAVLVILAQLTVSGSS). Ig-like V-type domains follow at residues 25-125 (YQII…LSVQ) and 128-217 (GTLN…LTVN). Over 25–239 (YQIIEGPRNV…GEGQALPTWA (215 aa)) the chain is Extracellular. N-linked (GlcNAc...) asparagine glycans are attached at residues N33 and N45. An intrachain disulfide couples C46 to C109. N-linked (GlcNAc...) asparagine glycosylation is found at N146, N196, and N217. A disulfide bridge links C149 with C201. The helical transmembrane segment at 240–260 (IILLAVAFSLLLILIIALIII) threads the bilayer. Topologically, residues 261–369 (FCCCCVSRRE…PQKIRNVTIV (109 aa)) are cytoplasmic. The segment at 321–354 (PKSGEVSLPEQRSSLPQQELDKHRPSPVTHPRVS) is disordered.

This sequence belongs to the immunoglobulin superfamily. In terms of assembly, interacts with MAGI1 at tight junctions, forms a tripartite complex with NPHS1. Interacts with LNX1 isoform 2 via its PDZ 2 domain, it may also interact with other isoforms containing this domain. In kidney, it is found in glomeruli and in the proximal tubules (at protein level).

The protein localises to the apical cell membrane. It is found in the cell junction. The protein resides in the tight junction. In terms of biological role, provides, together with MAGI1, an adhesion machinery at tight junctions, which may regulate the permeability of kidney glomerulus and small intestinal epithelial cells. Mediates calcium-independent homophilic cell adhesion. In testis, it may function as a cell adhesion molecule rather than a tight-junction protein. It may participate in the adhesion between spermatogonia-spermatogonia, spermatogonia-Sertoli cells, and Sertoli cells-Sertoli cells. This Rattus norvegicus (Rat) protein is Immunoglobulin superfamily member 5 (Igsf5).